The primary structure comprises 333 residues: Ketol-acid reductoisomerase (NADP(+)) (333 aa).

Residues 1 to 179 (MFYDDDADLT…GGTRAGVIKT (179 aa)) form the KARI N-terminal Rossmann domain. Residues 22-25 (YGSQ), Lys-45, Ser-48, Ser-50, and 80-83 (DTAQ) contribute to the NADP(+) site. The active site involves His-105. Gly-131 serves as a coordination point for NADP(+). The region spanning 180-325 (TFKDETETDL…KRLRDLMSWV (146 aa)) is the KARI C-terminal knotted domain. Mg(2+) contacts are provided by Asp-188, Glu-192, Glu-224, and Glu-228. Ser-249 lines the substrate pocket.

The protein belongs to the ketol-acid reductoisomerase family. Mg(2+) is required as a cofactor.

The catalysed reaction is (2R)-2,3-dihydroxy-3-methylbutanoate + NADP(+) = (2S)-2-acetolactate + NADPH + H(+). It catalyses the reaction (2R,3R)-2,3-dihydroxy-3-methylpentanoate + NADP(+) = (S)-2-ethyl-2-hydroxy-3-oxobutanoate + NADPH + H(+). Its pathway is amino-acid biosynthesis; L-isoleucine biosynthesis; L-isoleucine from 2-oxobutanoate: step 2/4. It participates in amino-acid biosynthesis; L-valine biosynthesis; L-valine from pyruvate: step 2/4. Involved in the biosynthesis of branched-chain amino acids (BCAA). Catalyzes an alkyl-migration followed by a ketol-acid reduction of (S)-2-acetolactate (S2AL) to yield (R)-2,3-dihydroxy-isovalerate. In the isomerase reaction, S2AL is rearranged via a Mg-dependent methyl migration to produce 3-hydroxy-3-methyl-2-ketobutyrate (HMKB). In the reductase reaction, this 2-ketoacid undergoes a metal-dependent reduction by NADPH to yield (R)-2,3-dihydroxy-isovalerate. This is Ketol-acid reductoisomerase (NADP(+)) from Mycobacterium avium.